We begin with the raw amino-acid sequence, 405 residues long: Serine/threonine-protein kinase SSN3 (405 aa).

The Protein kinase domain occupies Tyr40 to Phe350. ATP is bound by residues Ile46–Val54 and Lys71. Asp173 (proton acceptor) is an active-site residue. The disordered stretch occupies residues Asp377–Lys405. The span at Lys381 to Gly391 shows a compositional bias: polar residues.

It belongs to the protein kinase superfamily. CMGC Ser/Thr protein kinase family. CDC2/CDKX subfamily. In terms of assembly, component of the srb8-11 complex, a regulatory module of the Mediator complex. It depends on Mg(2+) as a cofactor.

It localises to the nucleus. The catalysed reaction is L-seryl-[protein] + ATP = O-phospho-L-seryl-[protein] + ADP + H(+). It catalyses the reaction L-threonyl-[protein] + ATP = O-phospho-L-threonyl-[protein] + ADP + H(+). The enzyme catalyses [DNA-directed RNA polymerase] + ATP = phospho-[DNA-directed RNA polymerase] + ADP + H(+). Its function is as follows. Component of the srb8-11 complex. The srb8-11 complex is a regulatory module of the Mediator complex which is itself dependent transcription. The srb8-11 complex may be involved in the transcriptional repression of a subset of genes regulated by Mediator. It may inhibit the association of the Mediator complex with RNA polymerase II to form the holoenzyme complex. The srb8-11 complex phosphorylates the C-terminal domain (CTD) of the largest subunit of RNA polymerase II. The chain is Serine/threonine-protein kinase SSN3 (SSN3) from Yarrowia lipolytica (strain CLIB 122 / E 150) (Yeast).